The sequence spans 685 residues: Probable glucan endo-1,3-beta-glucosidase btgC (685 aa).

Disordered stretches follow at residues 1–96 (MSGP…NLGP), 119–168 (GIDA…RDSY), and 180–202 (PAGQ…SPYQ). At 1–312 (MSGPHRSFSF…PTPGGGSRKR (312 aa)) the chain is on the cytoplasmic side. 2 stretches are compositionally biased toward polar residues: residues 47-61 (SARS…SSGF) and 73-90 (GQNS…TTPG). The chain crosses the membrane as a helical; Signal-anchor for type II membrane protein span at residues 313–333 (GWIVGLALAFIVVGAIVGGAV). Residues 334–685 (GGTLGNRENE…IPDCGGKTAA (352 aa)) lie on the Extracellular side of the membrane. Residues 335-369 (GTLGNRENEAPDTTKSASSDTESNGDLNKDSSEIK) form a disordered region. Polar residues predominate over residues 345–360 (PDTTKSASSDTESNGD). 3 N-linked (GlcNAc...) asparagine glycosylation sites follow: asparagine 405, asparagine 428, and asparagine 456. The active-site Proton donor is the glutamate 488. The active-site Nucleophile is glutamate 587. N-linked (GlcNAc...) asparagine glycosylation is present at asparagine 632.

Belongs to the glycosyl hydrolase 17 family.

The protein resides in the cell membrane. The catalysed reaction is Hydrolysis of (1-&gt;3)-beta-D-glucosidic linkages in (1-&gt;3)-beta-D-glucans.. Functionally, glucanases play a role in cell expansion during growth, in cell-cell fusion during mating, and in spore release during sporulation. This enzyme may be involved in beta-glucan degradation. Active on laminarin and lichenan. The polypeptide is Probable glucan endo-1,3-beta-glucosidase btgC (btgC) (Aspergillus oryzae (strain ATCC 42149 / RIB 40) (Yellow koji mold)).